Consider the following 642-residue polypeptide: Threonine--tRNA ligase (642 aa).

Residues 1 to 61 (MPVITLPDGS…DTDAQLAIIT (61 aa)) enclose the TGS domain. Residues 243–534 (DHRKIGKQLD…LTEEFAGFFP (292 aa)) are catalytic. Residues cysteine 334, histidine 385, and histidine 511 each contribute to the Zn(2+) site.

It belongs to the class-II aminoacyl-tRNA synthetase family. In terms of assembly, homodimer. Requires Zn(2+) as cofactor.

The protein localises to the cytoplasm. The enzyme catalyses tRNA(Thr) + L-threonine + ATP = L-threonyl-tRNA(Thr) + AMP + diphosphate + H(+). Functionally, catalyzes the attachment of threonine to tRNA(Thr) in a two-step reaction: L-threonine is first activated by ATP to form Thr-AMP and then transferred to the acceptor end of tRNA(Thr). Also edits incorrectly charged L-seryl-tRNA(Thr). The protein is Threonine--tRNA ligase of Pectobacterium atrosepticum (strain SCRI 1043 / ATCC BAA-672) (Erwinia carotovora subsp. atroseptica).